Consider the following 301-residue polypeptide: Homoserine O-acetyltransferase (301 aa).

The Acyl-thioester intermediate role is filled by Cys-142. Substrate is bound by residues Lys-163 and Ser-192. Residue His-235 is the Proton acceptor of the active site. Glu-237 is a catalytic residue. Arg-249 provides a ligand contact to substrate.

The protein belongs to the MetA family.

It is found in the cytoplasm. It catalyses the reaction L-homoserine + acetyl-CoA = O-acetyl-L-homoserine + CoA. It participates in amino-acid biosynthesis; L-methionine biosynthesis via de novo pathway; O-acetyl-L-homoserine from L-homoserine: step 1/1. In terms of biological role, transfers an acetyl group from acetyl-CoA to L-homoserine, forming acetyl-L-homoserine. The protein is Homoserine O-acetyltransferase of Bacillus cereus (strain B4264).